The chain runs to 105 residues: MKLSQPLSIFAILAASTVAVAVPQDDACAQCLTEGTFCEGFAGPVGTCCDGLVCENAPGVADDAHCIRKKKCLAKGETCVSIAGPVGTCCTGKCTFVAPDYSVCK.

The N-terminal stretch at Met1–Ala21 is a signal peptide.

Interacts with Arabidopsis thaliana PGIP1.

It is found in the secreted. Effector protein required for full virulence. Directly interacts with and functionally inactivates PG-inhibiting proteins (PGIPs). PGIPs are a defense mechanism of infected plants, that inhibit the plant pathogens secreted polygalacturonases (PGs) used to degrade the plant cell wall. Excerts its function by interacting with host PGIPs to negate their polygalacturonase-inhibiting function via enhanced dissociation of PGIPs from PGs. The polypeptide is Secreted effector protein PINE1 (Sclerotinia sclerotiorum (strain ATCC 18683 / 1980 / Ss-1) (White mold)).